Here is a 205-residue protein sequence, read N- to C-terminus: uncharacterized protein (205 aa).

Positions 1–40 (MSAGKSYRKKMKQRRMNMKISKYALGILMLSLVFVLSACG) are cleaved as a signal peptide. The interval 44-82 (STKESTHDNHSDSSTHEEMDHSGSADVPEGLQESKNPKY) is disordered. The span at 47-66 (ESTHDNHSDSSTHEEMDHSG) shows a compositional bias: basic and acidic residues.

This is an uncharacterized protein from Bacillus subtilis (strain 168).